The chain runs to 179 residues: Replication restart protein DnaT (179 aa).

Residues S151–E168 are compositionally biased toward polar residues. Positions S151 to G179 are disordered.

The protein belongs to the DnaT family. In terms of assembly, homooligomerizes. Interacts with PriB. Component of the replication restart primosome. Primosome assembly occurs via a 'hand-off' mechanism. PriA binds to replication forks, subsequently PriB then DnaT bind; DnaT then displaces ssDNA to generate the helicase loading substrate.

Its function is as follows. Involved in the restart of stalled replication forks, which reloads the replicative helicase on sites other than the origin of replication. Can function in multiple replication restart pathways. Displaces ssDNA from a PriB-ssDNA complex. Probably forms a spiral filament on ssDNA. This chain is Replication restart protein DnaT, found in Salmonella schwarzengrund (strain CVM19633).